Here is a 242-residue protein sequence, read N- to C-terminus: Probable transcriptional regulatory protein EF_0663 (242 aa).

Over residues 1–14 the composition is skewed to polar residues; that stretch reads MSGHSKWSNIQGRK. The tract at residues 1 to 22 is disordered; sequence MSGHSKWSNIQGRKNAQDAKRG.

Belongs to the TACO1 family.

It is found in the cytoplasm. This chain is Probable transcriptional regulatory protein EF_0663, found in Enterococcus faecalis (strain ATCC 700802 / V583).